The chain runs to 207 residues: ATP-dependent Clp protease proteolytic subunit 1 (207 aa).

Catalysis depends on Ser-103, which acts as the Nucleophile. His-128 is a catalytic residue.

It belongs to the peptidase S14 family. As to quaternary structure, fourteen ClpP subunits assemble into 2 heptameric rings which stack back to back to give a disk-like structure with a central cavity, resembling the structure of eukaryotic proteasomes.

It localises to the cytoplasm. It carries out the reaction Hydrolysis of proteins to small peptides in the presence of ATP and magnesium. alpha-casein is the usual test substrate. In the absence of ATP, only oligopeptides shorter than five residues are hydrolyzed (such as succinyl-Leu-Tyr-|-NHMec, and Leu-Tyr-Leu-|-Tyr-Trp, in which cleavage of the -Tyr-|-Leu- and -Tyr-|-Trp bonds also occurs).. Functionally, cleaves peptides in various proteins in a process that requires ATP hydrolysis. Has a chymotrypsin-like activity. Plays a major role in the degradation of misfolded proteins. This chain is ATP-dependent Clp protease proteolytic subunit 1, found in Tropheryma whipplei (strain Twist) (Whipple's bacillus).